Here is a 42-residue protein sequence, read N- to C-terminus: MSTCEITSGNCRNFPLILAVDCAIIIPNTNFIHSFLIYSLRI.

A helical transmembrane segment spans residues 15–37; it reads PLILAVDCAIIIPNTNFIHSFLI.

It localises to the membrane. This is an uncharacterized protein from Dictyostelium discoideum (Social amoeba).